We begin with the raw amino-acid sequence, 92 residues long: Bombyxin A-9 (92 aa).

Residues methionine 1–threonine 19 form the signal peptide. Glutamine 20 is subject to Pyrrolidone carboxylic acid. 3 disulfide bridges follow: cysteine 29–cysteine 79, cysteine 41–cysteine 92, and cysteine 78–cysteine 83. Residues serine 50–glutamine 71 constitute a propeptide, c peptide like.

It belongs to the insulin family. As to quaternary structure, heterodimer of a B chain and an A chain linked by two disulfide bonds.

It is found in the secreted. Functionally, brain peptide responsible for activation of prothoracic glands to produce ecdysone in insects. In Bombyx mori (Silk moth), this protein is Bombyxin A-9 (BBXA9).